The sequence spans 316 residues: uncharacterized protein (316 aa).

The protein to yeast YGR277c.

This is an uncharacterized protein from Schizosaccharomyces pombe (strain 972 / ATCC 24843) (Fission yeast).